The chain runs to 397 residues: 1-deoxy-D-xylulose 5-phosphate reductoisomerase (397 aa).

NADPH contacts are provided by T17, G18, S19, I20, N47, and N130. A 1-deoxy-D-xylulose 5-phosphate-binding site is contributed by K131. E132 provides a ligand contact to NADPH. D156 lines the Mn(2+) pocket. The 1-deoxy-D-xylulose 5-phosphate site is built by S157, E158, S182, and H205. Residue E158 coordinates Mn(2+). G211 provides a ligand contact to NADPH. Positions 218, 223, 224, and 227 each coordinate 1-deoxy-D-xylulose 5-phosphate. A Mn(2+)-binding site is contributed by E227.

This sequence belongs to the DXR family. Requires Mg(2+) as cofactor. The cofactor is Mn(2+).

It catalyses the reaction 2-C-methyl-D-erythritol 4-phosphate + NADP(+) = 1-deoxy-D-xylulose 5-phosphate + NADPH + H(+). The protein operates within isoprenoid biosynthesis; isopentenyl diphosphate biosynthesis via DXP pathway; isopentenyl diphosphate from 1-deoxy-D-xylulose 5-phosphate: step 1/6. Functionally, catalyzes the NADPH-dependent rearrangement and reduction of 1-deoxy-D-xylulose-5-phosphate (DXP) to 2-C-methyl-D-erythritol 4-phosphate (MEP). The chain is 1-deoxy-D-xylulose 5-phosphate reductoisomerase from Allorhizobium ampelinum (strain ATCC BAA-846 / DSM 112012 / S4) (Agrobacterium vitis (strain S4)).